Reading from the N-terminus, the 332-residue chain is Succinylglutamate desuccinylase (332 aa).

Positions 59, 62, and 151 each coordinate Zn(2+). Glu-215 is a catalytic residue.

It belongs to the AspA/AstE family. Succinylglutamate desuccinylase subfamily. Zn(2+) is required as a cofactor.

It carries out the reaction N-succinyl-L-glutamate + H2O = L-glutamate + succinate. The protein operates within amino-acid degradation; L-arginine degradation via AST pathway; L-glutamate and succinate from L-arginine: step 5/5. Functionally, transforms N(2)-succinylglutamate into succinate and glutamate. This is Succinylglutamate desuccinylase from Pseudomonas aeruginosa (strain LESB58).